Reading from the N-terminus, the 194-residue chain is Putative 3-methyladenine DNA glycosylase (194 aa).

It belongs to the DNA glycosylase MPG family.

This chain is Putative 3-methyladenine DNA glycosylase, found in Chlamydia felis (strain Fe/C-56) (Chlamydophila felis).